Consider the following 364-residue polypeptide: MAAHPTVGVEEEFLLVDPDSGAPIARNRDVARHAADRGVDLQLELTSCQVETATGVASSMADVREQLTHLRSTVARAADDSGARLLAVAVPPTVPHEFPVTDNPRYHRIAERFGMLAREQGICGAHVHVAVPTREVAIRVSNRLRPWLPVLLALTANSAIYRNADSGYASWRRMLWARWPSAGPPPHFDSADEFDAMVRMLLQSGAMLDEGQVYWDVRPSADFPTIEVRVADVPATVADTVLFAAIVRATVMTLLGDERDGAGVPRISAHALDAAYWRSARDGLDGIAIDLAESHAPMPARDLLGVLVDRITPALRAVGDHDLVRDGLARLDDEGNGAMRQRAAWRRRGEIADVIDAVAEATLA.

This sequence belongs to the glutamate--cysteine ligase type 2 family. YbdK subfamily.

The enzyme catalyses L-cysteine + L-glutamate + ATP = gamma-L-glutamyl-L-cysteine + ADP + phosphate + H(+). Functionally, ATP-dependent carboxylate-amine ligase which exhibits weak glutamate--cysteine ligase activity. The chain is Putative glutamate--cysteine ligase 2-2 from Mycobacterium sp. (strain JLS).